The sequence spans 453 residues: MFFMDISGQRMLVIGWGKTGVASARFLISRGARVVVADEKNLSLENDVLSKLGEDHGQSVELADYGISALAQVDAVVPSPGVPPFHPVLKEAVKRCIPVISELELACRYLQTPMIAITGTNGKTTTTSLIGEILSGSGRKVFVGGNIGTPLVEYVTGPQTADCAVVEISSFQLQWVDQFHAFVSILLNTTCDHVNYHGSFEAYRAVKERIFNNQGKQDVAILNADEPDSAVLAESLSSPVFFFSTTKMVERGLYQEKDRLICLDGEGKQEFYPLSMIRLPGAHNVENVMAAILASRACGCSPENVINAISGFSGIAHRIEFTREIGGVKFYDDSKGTNVGAVKRAIETFSDPIILLMGGRDKDGDFETLSALLQDRVKALVIFGEARERIQERIGGIVPTVLTPSLKEAIAAARRQACAGDVVLLSPGCASFDEFADYKARGRFFKEEVRAFA.

119-125 is an ATP binding site; the sequence is GTNGKTT.

This sequence belongs to the MurCDEF family.

Its subcellular location is the cytoplasm. The catalysed reaction is UDP-N-acetyl-alpha-D-muramoyl-L-alanine + D-glutamate + ATP = UDP-N-acetyl-alpha-D-muramoyl-L-alanyl-D-glutamate + ADP + phosphate + H(+). It functions in the pathway cell wall biogenesis; peptidoglycan biosynthesis. Functionally, cell wall formation. Catalyzes the addition of glutamate to the nucleotide precursor UDP-N-acetylmuramoyl-L-alanine (UMA). In Syntrophus aciditrophicus (strain SB), this protein is UDP-N-acetylmuramoylalanine--D-glutamate ligase.